The chain runs to 430 residues: Ribosomal protein uS12 methylthiotransferase RimO (430 aa).

Residues 2 to 119 (ISVYSISLGC…WPEMIGRALG (118 aa)) enclose the MTTase N-terminal domain. [4Fe-4S] cluster is bound by residues C11, C46, C81, C145, C149, and C152. One can recognise a Radical SAM core domain in the interval 131–361 (STGPSYAYLK…MEVQAEISEE (231 aa)). In terms of domain architecture, TRAM spans 364-430 (EGFTGSDEDV…SRTYDLVALS (67 aa)).

It belongs to the methylthiotransferase family. RimO subfamily. Requires [4Fe-4S] cluster as cofactor.

The protein resides in the cytoplasm. It catalyses the reaction L-aspartate(89)-[ribosomal protein uS12]-hydrogen + (sulfur carrier)-SH + AH2 + 2 S-adenosyl-L-methionine = 3-methylsulfanyl-L-aspartate(89)-[ribosomal protein uS12]-hydrogen + (sulfur carrier)-H + 5'-deoxyadenosine + L-methionine + A + S-adenosyl-L-homocysteine + 2 H(+). Catalyzes the methylthiolation of an aspartic acid residue of ribosomal protein uS12. The protein is Ribosomal protein uS12 methylthiotransferase RimO of Oleidesulfovibrio alaskensis (strain ATCC BAA-1058 / DSM 17464 / G20) (Desulfovibrio alaskensis).